The primary structure comprises 191 residues: Putative glutathione-dependent formaldehyde-activating enzyme (191 aa).

The CENP-V/GFA domain maps to 20–166; sequence FPGGNLYCKC…FHSLGLETYD (147 aa). The Zn(2+) site is built by Cys27, Cys29, Cys48, Cys50, Cys53, Cys95, and Cys98.

It belongs to the Gfa family. Zn(2+) is required as a cofactor.

The enzyme catalyses S-(hydroxymethyl)glutathione = glutathione + formaldehyde. Its pathway is one-carbon metabolism; formaldehyde degradation; formate from formaldehyde (glutathione route): step 1/3. In terms of biological role, catalyzes the condensation of formaldehyde and glutathione to S-hydroxymethylglutathione. This chain is Putative glutathione-dependent formaldehyde-activating enzyme, found in Aspergillus niger (strain ATCC MYA-4892 / CBS 513.88 / FGSC A1513).